Reading from the N-terminus, the 261-residue chain is 4-hydroxy-tetrahydrodipicolinate reductase (261 aa).

9 to 14 provides a ligand contact to NAD(+); the sequence is GCLGRM. Arg-36 lines the NADP(+) pocket. NAD(+) is bound by residues 97–99 and 118–121; these read GTT and SANM. Residue His-151 is the Proton donor/acceptor of the active site. His-152 is a binding site for (S)-2,3,4,5-tetrahydrodipicolinate. Lys-155 (proton donor) is an active-site residue. A (S)-2,3,4,5-tetrahydrodipicolinate-binding site is contributed by 161–162; it reads GT.

The protein belongs to the DapB family.

It is found in the cytoplasm. It catalyses the reaction (S)-2,3,4,5-tetrahydrodipicolinate + NAD(+) + H2O = (2S,4S)-4-hydroxy-2,3,4,5-tetrahydrodipicolinate + NADH + H(+). The catalysed reaction is (S)-2,3,4,5-tetrahydrodipicolinate + NADP(+) + H2O = (2S,4S)-4-hydroxy-2,3,4,5-tetrahydrodipicolinate + NADPH + H(+). The protein operates within amino-acid biosynthesis; L-lysine biosynthesis via DAP pathway; (S)-tetrahydrodipicolinate from L-aspartate: step 4/4. Its function is as follows. Catalyzes the conversion of 4-hydroxy-tetrahydrodipicolinate (HTPA) to tetrahydrodipicolinate. The chain is 4-hydroxy-tetrahydrodipicolinate reductase from Wolbachia pipientis wMel.